The primary structure comprises 126 residues: Protein C10 (126 aa).

An N-acetylalanine modification is found at Ala2.

Belongs to the UPF0456 family. Ubiquitously expressed, with higher expression in lung and fetal brain.

It is found in the cytoplasm. In terms of biological role, in brain, may be required for corpus callosum development. The chain is Protein C10 (C12orf57) from Homo sapiens (Human).